Here is a 383-residue protein sequence, read N- to C-terminus: S-adenosylmethionine synthase (383 aa).

His15 contacts ATP. Asp17 contacts Mg(2+). Glu43 serves as a coordination point for K(+). The L-methionine site is built by Glu56 and Gln99. The interval 99–109 (QSPDINQGVDR) is flexible loop. Residues 164–166 (DAK), 230–231 (RF), Asp239, 245–246 (RK), Ala262, and Lys266 contribute to the ATP site. Position 239 (Asp239) interacts with L-methionine. Lys270 contacts L-methionine.

The protein belongs to the AdoMet synthase family. Homotetramer; dimer of dimers. It depends on Mg(2+) as a cofactor. Requires K(+) as cofactor.

The protein localises to the cytoplasm. The catalysed reaction is L-methionine + ATP + H2O = S-adenosyl-L-methionine + phosphate + diphosphate. It functions in the pathway amino-acid biosynthesis; S-adenosyl-L-methionine biosynthesis; S-adenosyl-L-methionine from L-methionine: step 1/1. In terms of biological role, catalyzes the formation of S-adenosylmethionine (AdoMet) from methionine and ATP. The overall synthetic reaction is composed of two sequential steps, AdoMet formation and the subsequent tripolyphosphate hydrolysis which occurs prior to release of AdoMet from the enzyme. The polypeptide is S-adenosylmethionine synthase (Shewanella putrefaciens (strain CN-32 / ATCC BAA-453)).